The primary structure comprises 438 residues: 23S rRNA (uracil(1939)-C(5))-methyltransferase RlmD (438 aa).

In terms of domain architecture, TRAM spans 13–71 (KAPLGPMQTYLVEGLTHEAKGVARLNGKVTFIEGALPGETVTAQVNKPGRRFDEAVLNA). [4Fe-4S] cluster is bound by residues cysteine 84, cysteine 90, cysteine 93, and cysteine 167. S-adenosyl-L-methionine-binding residues include glutamine 271, phenylalanine 300, asparagine 305, glutamate 321, aspartate 348, and aspartate 368. The active-site Nucleophile is the cysteine 394.

It belongs to the class I-like SAM-binding methyltransferase superfamily. RNA M5U methyltransferase family. RlmD subfamily.

It carries out the reaction uridine(1939) in 23S rRNA + S-adenosyl-L-methionine = 5-methyluridine(1939) in 23S rRNA + S-adenosyl-L-homocysteine + H(+). Its function is as follows. Catalyzes the formation of 5-methyl-uridine at position 1939 (m5U1939) in 23S rRNA. The polypeptide is 23S rRNA (uracil(1939)-C(5))-methyltransferase RlmD (Marinomonas posidonica (strain CECT 7376 / NCIMB 14433 / IVIA-Po-181)).